The chain runs to 49 residues: Multidrug efflux pump accessory protein AcrZ (49 aa).

Residues 1–7 (MLELLKS) lie on the Periplasmic side of the membrane. Residues 8–28 (LVFAVIMVPVVMAIILGLIYG) form a helical membrane-spanning segment. Topologically, residues 29-49 (LGEVFNIFSGVGKKDQPGQNH) are cytoplasmic.

Belongs to the AcrZ family. Part of the AcrA-AcrB-AcrZ-TolC efflux pump, interacts directly with AcrB.

It localises to the cell inner membrane. Its function is as follows. AcrA-AcrB-AcrZ-TolC is a drug efflux protein complex with a broad substrate specificity. This protein binds to AcrB and is required for efflux of some but not all substrates, suggesting it may influence the specificity of drug export. In Escherichia coli O157:H7, this protein is Multidrug efflux pump accessory protein AcrZ.